The chain runs to 237 residues: MTVLPALPPLDDLETLNVHLETLSAENRVCWALERGPDHPALSSSFGAQSAVMLHLLTRFAPDIPVILVDTGYLFPETYRFADTLTERLKLNLKVYQPLRSGAWTEARHGRLWEQGIDGINQYNTLHKVEPMRRALEELQVGTWFTGLRRGQSSTRTQTSIVQQRDERYKISPIADWTDRDIWEYMKHHDLPYHPLWEQGYVSIGDIHTTRPLEPGMREEDTRFFGFKRECGIHENI.

Cysteine 231 serves as the catalytic Nucleophile; cysteine thiosulfonate intermediate.

Belongs to the PAPS reductase family. CysH subfamily.

The protein resides in the cytoplasm. The enzyme catalyses [thioredoxin]-disulfide + sulfite + adenosine 3',5'-bisphosphate + 2 H(+) = [thioredoxin]-dithiol + 3'-phosphoadenylyl sulfate. It functions in the pathway sulfur metabolism; hydrogen sulfide biosynthesis; sulfite from sulfate: step 3/3. Functionally, catalyzes the formation of sulfite from phosphoadenosine 5'-phosphosulfate (PAPS) using thioredoxin as an electron donor. This chain is Phosphoadenosine 5'-phosphosulfate reductase, found in Xylella fastidiosa (strain 9a5c).